The sequence spans 235 residues: Pathogen-related protein (235 aa).

The polypeptide is Pathogen-related protein (Hordeum vulgare (Barley)).